We begin with the raw amino-acid sequence, 182 residues long: UPF0316 protein Sde_0566 (182 aa).

Helical transmembrane passes span Val-7–Gly-27, Leu-41–Phe-61, and Trp-67–Ile-87.

This sequence belongs to the UPF0316 family.

The protein resides in the cell membrane. The protein is UPF0316 protein Sde_0566 of Saccharophagus degradans (strain 2-40 / ATCC 43961 / DSM 17024).